A 310-amino-acid polypeptide reads, in one-letter code: Homoserine O-acetyltransferase (310 aa).

Residue C142 is the Acyl-thioester intermediate of the active site. Substrate is bound by residues K163 and S192. H235 serves as the catalytic Proton acceptor. Residue E237 is part of the active site. R249 is a substrate binding site.

It belongs to the MetA family.

The protein localises to the cytoplasm. The enzyme catalyses L-homoserine + acetyl-CoA = O-acetyl-L-homoserine + CoA. It participates in amino-acid biosynthesis; L-methionine biosynthesis via de novo pathway; O-acetyl-L-homoserine from L-homoserine: step 1/1. Transfers an acetyl group from acetyl-CoA to L-homoserine, forming acetyl-L-homoserine. This Lachnospira eligens (strain ATCC 27750 / DSM 3376 / VPI C15-48 / C15-B4) (Eubacterium eligens) protein is Homoserine O-acetyltransferase.